A 573-amino-acid chain; its full sequence is Solute carrier family 41 member 2 (573 aa).

Topologically, residues 1 to 162 (MTHSKGRPVT…KESSGVMALQ (162 aa)) are extracellular. Ser-137 and Ser-138 each carry phosphoserine. A helical transmembrane segment spans residues 163–183 (ILVPFLLAGFGTVSAGMVLDI). Residues 184 to 195 (VQHWEVFKNVTE) are Cytoplasmic-facing. The chain crosses the membrane as a helical span at residues 196-216 (VFILVPALLGLKGNLEMTLAS). Over 217–245 (RLSTAVNVGKMDSPIEKWNLIIGNLALKQ) the chain is Extracellular. Residues 246–266 (VQATVVGFLAAVAAIILGWIP) form a helical membrane-spanning segment. Residues 267-282 (EGKYYLSHSILLCSSS) are Cytoplasmic-facing. Residues 283-303 (VATAFIASLLQGIIMVGVIVG) form a helical membrane-spanning segment. Topologically, residues 304–313 (SKKTGINPDN) are extracellular. Residues 314–334 (VATPIAASFGDLITLAILAWI) form a helical membrane-spanning segment. The Cytoplasmic segment spans residues 335 to 347 (SQGLYSCLETYYY). Residues 348-368 (ISPLVCAFFLALTPIWIIIAA) form a helical membrane-spanning segment. At 369-376 (KHPATRTV) the chain is on the extracellular side. Residues 377 to 397 (LHSGWEPVITAMVISSIGGLI) traverse the membrane as a helical segment. Topologically, residues 398-406 (LDTTVSDPN) are cytoplasmic. The helical transmembrane segment at 407 to 427 (LVGIVVYTPVINGIGGNLVAI) threads the bilayer. Over 428–469 (QASRISTYLHLHSIPGELPEEPKGCSYPFRTFFGSGVNNKSA) the chain is Extracellular. Residues 470–490 (QVLLLFVIPGHLIFLYTIHLM) form a helical membrane-spanning segment. Over 491–498 (KSGHTSLT) the chain is Cytoplasmic. A helical membrane pass occupies residues 499–519 (VVFVVVYLFAAVLQVFTLLWI). The Extracellular portion of the chain corresponds to 520-543 (ADWMVHRFWRKGKDPDSFSIPYLT). Residues 544–564 (ALGDLLGTALLALSFHFLWLI) form a helical membrane-spanning segment. Over 565-573 (GDRDGDVGD) the chain is Cytoplasmic.

The protein belongs to the SLC41A transporter family.

It is found in the cell membrane. The catalysed reaction is Mg(2+)(in) = Mg(2+)(out). It carries out the reaction Mn(2+)(in) = Mn(2+)(out). It catalyses the reaction Co(2+)(in) = Co(2+)(out). The enzyme catalyses Ni(2+)(in) = Ni(2+)(out). The catalysed reaction is Fe(2+)(in) = Fe(2+)(out). Its function is as follows. Acts as a plasma-membrane magnesium transporter. Can also mediate the transport of other divalent metal cations in an order of Ba(2+) &gt; Ni(2+) &gt; Co(2+) &gt; Fe(2+) &gt; Mn(2+). This chain is Solute carrier family 41 member 2 (Slc41a2), found in Mus musculus (Mouse).